We begin with the raw amino-acid sequence, 328 residues long: D-cysteine desulfhydrase (328 aa).

An N6-(pyridoxal phosphate)lysine modification is found at lysine 51.

The protein belongs to the ACC deaminase/D-cysteine desulfhydrase family. Homodimer. Requires pyridoxal 5'-phosphate as cofactor.

It catalyses the reaction D-cysteine + H2O = hydrogen sulfide + pyruvate + NH4(+) + H(+). In terms of biological role, catalyzes the alpha,beta-elimination reaction of D-cysteine and of several D-cysteine derivatives. It could be a defense mechanism against D-cysteine. The polypeptide is D-cysteine desulfhydrase (Escherichia coli (strain SMS-3-5 / SECEC)).